Consider the following 267-residue polypeptide: 4-hydroxy-tetrahydrodipicolinate reductase (267 aa).

NAD(+) is bound by residues glycine 8–methionine 13 and aspartate 34. Residue arginine 35 coordinates NADP(+). NAD(+)-binding positions include glycine 98–threonine 100 and alanine 122–phenylalanine 125. Histidine 155 (proton donor/acceptor) is an active-site residue. Residue histidine 156 coordinates (S)-2,3,4,5-tetrahydrodipicolinate. Catalysis depends on lysine 159, which acts as the Proton donor. Position 165–166 (glycine 165–threonine 166) interacts with (S)-2,3,4,5-tetrahydrodipicolinate.

Belongs to the DapB family.

The protein resides in the cytoplasm. The catalysed reaction is (S)-2,3,4,5-tetrahydrodipicolinate + NAD(+) + H2O = (2S,4S)-4-hydroxy-2,3,4,5-tetrahydrodipicolinate + NADH + H(+). It carries out the reaction (S)-2,3,4,5-tetrahydrodipicolinate + NADP(+) + H2O = (2S,4S)-4-hydroxy-2,3,4,5-tetrahydrodipicolinate + NADPH + H(+). It participates in amino-acid biosynthesis; L-lysine biosynthesis via DAP pathway; (S)-tetrahydrodipicolinate from L-aspartate: step 4/4. Functionally, catalyzes the conversion of 4-hydroxy-tetrahydrodipicolinate (HTPA) to tetrahydrodipicolinate. The sequence is that of 4-hydroxy-tetrahydrodipicolinate reductase from Pseudomonas amygdali pv. tabaci (Pseudomonas syringae pv. tabaci).